Consider the following 236-residue polypeptide: Ubiquinone biosynthesis O-methyltransferase (236 aa).

Residues Arg-39, Gly-59, Asp-80, and Met-124 each coordinate S-adenosyl-L-methionine.

This sequence belongs to the methyltransferase superfamily. UbiG/COQ3 family.

It carries out the reaction a 3-demethylubiquinol + S-adenosyl-L-methionine = a ubiquinol + S-adenosyl-L-homocysteine + H(+). The enzyme catalyses a 3-(all-trans-polyprenyl)benzene-1,2-diol + S-adenosyl-L-methionine = a 2-methoxy-6-(all-trans-polyprenyl)phenol + S-adenosyl-L-homocysteine + H(+). It participates in cofactor biosynthesis; ubiquinone biosynthesis. Functionally, O-methyltransferase that catalyzes the 2 O-methylation steps in the ubiquinone biosynthetic pathway. The polypeptide is Ubiquinone biosynthesis O-methyltransferase (Shewanella putrefaciens (strain CN-32 / ATCC BAA-453)).